The sequence spans 354 residues: Rhodopsin (354 aa).

Residues 1–36 lie on the Extracellular side of the membrane; sequence MNGTEGPNFYVPMSNKTGIVRSPFEYPQYYLAEPWK. 2 N-linked (GlcNAc...) asparagine glycosylation sites follow: Asn2 and Asn15. The chain crosses the membrane as a helical span at residues 37-61; sequence YSVLAAYMFLLILLGLPINFMTLYV. At 62–73 the chain is on the cytoplasmic side; that stretch reads TIQHKKLRTPLN. A helical transmembrane segment spans residues 74-96; the sequence is YILLNLAFANHFMVLCGFTITMY. The Extracellular portion of the chain corresponds to 97–110; the sequence is TSLHGYFVFGQTGC. A disulfide bridge connects residues Cys110 and Cys187. Residues 111–133 traverse the membrane as a helical segment; the sequence is YFEGFFATLGGEIALWSLVVLAI. Positions 134-136 match the 'Ionic lock' involved in activated form stabilization motif; it reads ERY. The Cytoplasmic portion of the chain corresponds to 134–152; sequence ERYIVVCKPMSNFRFGENH. Residues 153–173 traverse the membrane as a helical segment; it reads AMMGVAFTWIMALACAVPPLF. Residues 174-202 are Extracellular-facing; that stretch reads GWSRYIPEGMQCSCGVDYYTLKPEVNNES. The helical transmembrane segment at 203–224 threads the bilayer; that stretch reads FVIYMFVVHFLIPLIIISFCYG. At 225–252 the chain is on the cytoplasmic side; it reads RLVCTVKEAAAQQQESATTQKAEKEVTR. Residues 253–274 form a helical membrane-spanning segment; the sequence is MVVIMVIFFLICWVPYAYVAFY. The Extracellular portion of the chain corresponds to 275–286; it reads IFTHQGSEFGPI. A helical membrane pass occupies residues 287–308; that stretch reads FMTVPAFFAKSSAIYNPVIYIM. Position 296 is an N6-(retinylidene)lysine (Lys296). At 309–354 the chain is on the cytoplasmic side; that stretch reads LNKQFRNCMITTLCCGKNPFGDEDASSAATSKTEATSVSTSQVSPA. S-palmitoyl cysteine attachment occurs at residues Cys322 and Cys323. The tract at residues 331-354 is disordered; that stretch reads EDASSAATSKTEATSVSTSQVSPA. Residues 334–354 are compositionally biased toward low complexity; that stretch reads SSAATSKTEATSVSTSQVSPA.

The protein belongs to the G-protein coupled receptor 1 family. Opsin subfamily. Contains one covalently linked retinal chromophore. Upon light absorption, the covalently bound 11-cis-retinal is converted to all-trans-retinal. After hydrolysis of the Schiff base and release of the covalently bound all-trans-retinal, active rhodopsin is regenerated by binding of a fresh molecule of 11-cis-retinal. Retina. Localized in the ventral part of the retina.

It localises to the membrane. The protein resides in the cell projection. It is found in the cilium. The protein localises to the photoreceptor outer segment. Photoreceptor required for image-forming vision at low light intensity. Required for photoreceptor cell viability after birth. May use a mixture of retinal and 3-dehydroretinal as visual pigment. Light-induced isomerization of 11-cis to all-trans retinal triggers a conformational change that activates signaling via G-proteins. Subsequent receptor phosphorylation mediates displacement of the bound G-protein alpha subunit by arrestin and terminates signaling. The polypeptide is Rhodopsin (RHO) (Aquarana catesbeiana (American bullfrog)).